A 429-amino-acid chain; its full sequence is UDP-N-acetylglucosamine 1-carboxyvinyltransferase (429 aa).

22–23 contributes to the phosphoenolpyruvate binding site; the sequence is KN. Arginine 102 provides a ligand contact to UDP-N-acetyl-alpha-D-glucosamine. Cysteine 126 serves as the catalytic Proton donor. Cysteine 126 bears the 2-(S-cysteinyl)pyruvic acid O-phosphothioketal mark. 2 residues coordinate UDP-N-acetyl-alpha-D-glucosamine: aspartate 316 and isoleucine 338.

It belongs to the EPSP synthase family. MurA subfamily.

It localises to the cytoplasm. It carries out the reaction phosphoenolpyruvate + UDP-N-acetyl-alpha-D-glucosamine = UDP-N-acetyl-3-O-(1-carboxyvinyl)-alpha-D-glucosamine + phosphate. It participates in cell wall biogenesis; peptidoglycan biosynthesis. Cell wall formation. Adds enolpyruvyl to UDP-N-acetylglucosamine. The protein is UDP-N-acetylglucosamine 1-carboxyvinyltransferase of Methylorubrum extorquens (strain PA1) (Methylobacterium extorquens).